The following is a 487-amino-acid chain: Ribulose bisphosphate carboxylase large chain (487 aa).

The substrate site is built by Asn127 and Thr177. Lys179 functions as the Proton acceptor in the catalytic mechanism. Lys181 provides a ligand contact to substrate. Mg(2+) is bound by residues Lys205, Asp207, and Glu208. Lys205 is modified (N6-carboxylysine). His297 (proton acceptor) is an active-site residue. Substrate-binding residues include Arg298, His330, and Ser382.

It belongs to the RuBisCO large chain family. Type I subfamily. Heterohexadecamer of 8 large chains and 8 small chains. Requires Mg(2+) as cofactor.

The catalysed reaction is 2 (2R)-3-phosphoglycerate + 2 H(+) = D-ribulose 1,5-bisphosphate + CO2 + H2O. It carries out the reaction D-ribulose 1,5-bisphosphate + O2 = 2-phosphoglycolate + (2R)-3-phosphoglycerate + 2 H(+). RuBisCO catalyzes two reactions: the carboxylation of D-ribulose 1,5-bisphosphate, the primary event in carbon dioxide fixation, as well as the oxidative fragmentation of the pentose substrate. Both reactions occur simultaneously and in competition at the same active site. This chain is Ribulose bisphosphate carboxylase large chain, found in Paracoccus denitrificans (strain Pd 1222).